Here is a 57-residue protein sequence, read N- to C-terminus: Large ribosomal subunit protein bL33 (57 aa).

It belongs to the bacterial ribosomal protein bL33 family.

In Shewanella pealeana (strain ATCC 700345 / ANG-SQ1), this protein is Large ribosomal subunit protein bL33.